A 319-amino-acid polypeptide reads, in one-letter code: Tetrahydromethanopterin S-methyltransferase subunit H (319 aa).

It belongs to the MtrH family. The complex is composed of 8 subunits; MtrA, MtrB, MtrC, MtrD, MtrE, MtrF, MtrG and MtrH.

The catalysed reaction is 5-methyl-5,6,7,8-tetrahydromethanopterin + coenzyme M + 2 Na(+)(in) = 5,6,7,8-tetrahydromethanopterin + methyl-coenzyme M + 2 Na(+)(out). Its pathway is one-carbon metabolism; methanogenesis from CO(2); methyl-coenzyme M from 5,10-methylene-5,6,7,8-tetrahydromethanopterin: step 2/2. Functionally, part of a complex that catalyzes the formation of methyl-coenzyme M and tetrahydromethanopterin from coenzyme M and methyl-tetrahydromethanopterin. This is an energy-conserving, sodium-ion translocating step. MtrH catalyzes the transfer of the methyl group from methyl-tetrahydromethanopterin to the corrinoid prosthetic group of MtrA. The protein is Tetrahydromethanopterin S-methyltransferase subunit H of Methanococcus maripaludis (strain C5 / ATCC BAA-1333).